The primary structure comprises 204 residues: Molybdenum cofactor guanylyltransferase (204 aa).

GTP is bound by residues 12–14 (LAG), K25, N53, D71, and D101. D101 lines the Mg(2+) pocket.

It belongs to the MobA family. In terms of assembly, monomer. Mg(2+) is required as a cofactor.

The protein localises to the cytoplasm. The catalysed reaction is Mo-molybdopterin + GTP + H(+) = Mo-molybdopterin guanine dinucleotide + diphosphate. Functionally, transfers a GMP moiety from GTP to Mo-molybdopterin (Mo-MPT) cofactor (Moco or molybdenum cofactor) to form Mo-molybdopterin guanine dinucleotide (Mo-MGD) cofactor. In Ralstonia nicotianae (strain ATCC BAA-1114 / GMI1000) (Ralstonia solanacearum), this protein is Molybdenum cofactor guanylyltransferase.